A 213-amino-acid polypeptide reads, in one-letter code: Protein Tpen_0748 (213 aa).

The 201-residue stretch at 7–207 folds into the AMMECR1 domain; it reads EEGALLVRLA…ETTPKGDVVE (201 aa).

The polypeptide is Protein Tpen_0748 (Thermofilum pendens (strain DSM 2475 / Hrk 5)).